A 515-amino-acid chain; its full sequence is ATP synthase subunit alpha (515 aa).

169–176 (GDRQTGKT) is an ATP binding site.

It belongs to the ATPase alpha/beta chains family. F-type ATPases have 2 components, CF(1) - the catalytic core - and CF(0) - the membrane proton channel. CF(1) has five subunits: alpha(3), beta(3), gamma(1), delta(1), epsilon(1). CF(0) has three main subunits: a(1), b(2) and c(9-12). The alpha and beta chains form an alternating ring which encloses part of the gamma chain. CF(1) is attached to CF(0) by a central stalk formed by the gamma and epsilon chains, while a peripheral stalk is formed by the delta and b chains.

The protein localises to the cell inner membrane. It carries out the reaction ATP + H2O + 4 H(+)(in) = ADP + phosphate + 5 H(+)(out). Functionally, produces ATP from ADP in the presence of a proton gradient across the membrane. The alpha chain is a regulatory subunit. The sequence is that of ATP synthase subunit alpha from Neisseria meningitidis serogroup C / serotype 2a (strain ATCC 700532 / DSM 15464 / FAM18).